The following is a 262-amino-acid chain: 4-hydroxy-2-oxo-heptane-1,7-dioate aldolase (262 aa).

The active-site Proton acceptor is the His-45. Gln-147 provides a ligand contact to substrate. Glu-149 is an a divalent metal cation binding site. Positions 174 and 175 each coordinate substrate. Residue Asp-175 participates in a divalent metal cation binding.

It belongs to the HpcH/HpaI aldolase family. In terms of assembly, homohexamer; trimer of dimers. A divalent metal cation is required as a cofactor.

The catalysed reaction is 4-hydroxy-2-oxoheptanedioate = succinate semialdehyde + pyruvate. It participates in aromatic compound metabolism; 4-hydroxyphenylacetate degradation; pyruvate and succinate semialdehyde from 4-hydroxyphenylacetate: step 7/7. Functionally, catalyzes the reversible retro-aldol cleavage of 4-hydroxy-2-ketoheptane-1,7-dioate (HKHD) to pyruvate and succinic semialdehyde. The polypeptide is 4-hydroxy-2-oxo-heptane-1,7-dioate aldolase (Shigella sonnei (strain Ss046)).